Consider the following 100-residue polypeptide: C-X-C motif chemokine 11 (100 aa).

The signal sequence occupies residues 1 to 21; it reads MNRKVTAIALAAIIWATAAQG. Intrachain disulfides connect cysteine 30-cysteine 57 and cysteine 32-cysteine 74.

It belongs to the intercrine alpha (chemokine CxC) family. In terms of assembly, interacts with TNFAIP6 (via Link domain).

The protein resides in the secreted. Its function is as follows. Chemotactic for interleukin-activated T-cells but not unstimulated T-cells, neutrophils or monocytes. Induces calcium release in activated T-cells. Binds to CXCR3. May play an important role in CNS diseases which involve T-cell recruitment. May play a role in skin immune responses. The protein is C-X-C motif chemokine 11 (Cxcl11) of Mus musculus (Mouse).